Here is a 396-residue protein sequence, read N- to C-terminus: Cell division protein FtsZ 1 (396 aa).

The tract at residues 1 to 38 (MDSIVQDAIDEAEESEDSASEPADVAGGGGDTVPTGTM) is disordered. Positions 8-19 (AIDEAEESEDSA) are enriched in acidic residues. GTP-binding positions include 61 to 65 (GAGSN), 148 to 150 (GTG), glutamate 179, arginine 183, and aspartate 226. The tract at residues 358-396 (QIYGRNEAAEGDGPAQESTPEPEPEPQAGSEIEDIDYVE) is disordered.

Belongs to the FtsZ family. In terms of assembly, homodimer. Polymerizes to form a dynamic ring structure in a strictly GTP-dependent manner. Interacts directly with several other division proteins.

It localises to the cytoplasm. Its function is as follows. Essential cell division protein that forms a contractile ring structure (Z ring) at the future cell division site. The regulation of the ring assembly controls the timing and the location of cell division. One of the functions of the FtsZ ring is to recruit other cell division proteins to the septum to produce a new cell wall between the dividing cells. Binds GTP and shows GTPase activity. The sequence is that of Cell division protein FtsZ 1 from Halobacterium salinarum (strain ATCC 29341 / DSM 671 / R1).